Here is a 410-residue protein sequence, read N- to C-terminus: Ribosomal RNA large subunit methyltransferase G (410 aa).

This sequence belongs to the methyltransferase superfamily. RlmG family.

Its subcellular location is the cytoplasm. It carries out the reaction guanosine(1835) in 23S rRNA + S-adenosyl-L-methionine = N(2)-methylguanosine(1835) in 23S rRNA + S-adenosyl-L-homocysteine + H(+). Functionally, specifically methylates the guanine in position 1835 (m2G1835) of 23S rRNA. The chain is Ribosomal RNA large subunit methyltransferase G from Alteromonas mediterranea (strain DSM 17117 / CIP 110805 / LMG 28347 / Deep ecotype).